Consider the following 101-residue polypeptide: RNA silencing suppressor (101 aa).

A basic region spans residues 47 to 50; it reads RRRR. Residues 57–78 form a C4-type zinc finger; that stretch reads CPRCARVSPGFYFTTRCDGKTC.

The protein belongs to the carlaviruses nucleic acid-binding protein family.

Functionally, suppressor of viral-induced RNA silencing. The potential mechanism of action is based on sequestering siRNAs. This chain is RNA silencing suppressor (TUC), found in Dianthus caryophyllus (Carnation).